A 151-amino-acid polypeptide reads, in one-letter code: Ribosome maturation factor RimP (151 aa).

The protein belongs to the RimP family.

It localises to the cytoplasm. In terms of biological role, required for maturation of 30S ribosomal subunits. In Aliivibrio salmonicida (strain LFI1238) (Vibrio salmonicida (strain LFI1238)), this protein is Ribosome maturation factor RimP.